The chain runs to 74 residues: MSEKFNFNQGLIDLEKIVKAMESGDLSLEDSLNHFSKGVELTKQCQSALNKAEQKISMLTEQDNYTNEKPLKRL.

This sequence belongs to the XseB family. As to quaternary structure, heterooligomer composed of large and small subunits.

It is found in the cytoplasm. It catalyses the reaction Exonucleolytic cleavage in either 5'- to 3'- or 3'- to 5'-direction to yield nucleoside 5'-phosphates.. In terms of biological role, bidirectionally degrades single-stranded DNA into large acid-insoluble oligonucleotides, which are then degraded further into small acid-soluble oligonucleotides. The chain is Exodeoxyribonuclease 7 small subunit from Vesicomyosocius okutanii subsp. Calyptogena okutanii (strain HA).